The primary structure comprises 120 residues: NAD(P)H-quinone oxidoreductase subunit 3, chloroplastic (120 aa).

3 helical membrane passes run 9–29 (IFWAFLIISSLIPILAFFISG), 64–84 (MFALVFVVFDVETVFLYPWAM), and 88–108 (VLGLSVFLEAFVFVLILIVGL).

Belongs to the complex I subunit 3 family. As to quaternary structure, NDH is composed of at least 16 different subunits, 5 of which are encoded in the nucleus.

The protein resides in the plastid. It localises to the chloroplast thylakoid membrane. It catalyses the reaction a plastoquinone + NADH + (n+1) H(+)(in) = a plastoquinol + NAD(+) + n H(+)(out). It carries out the reaction a plastoquinone + NADPH + (n+1) H(+)(in) = a plastoquinol + NADP(+) + n H(+)(out). Its function is as follows. NDH shuttles electrons from NAD(P)H:plastoquinone, via FMN and iron-sulfur (Fe-S) centers, to quinones in the photosynthetic chain and possibly in a chloroplast respiratory chain. The immediate electron acceptor for the enzyme in this species is believed to be plastoquinone. Couples the redox reaction to proton translocation, and thus conserves the redox energy in a proton gradient. In Jasminum nudiflorum (Winter jasmine), this protein is NAD(P)H-quinone oxidoreductase subunit 3, chloroplastic.